Reading from the N-terminus, the 316-residue chain is Holliday junction branch migration complex subunit RuvB (316 aa).

The large ATPase domain (RuvB-L) stretch occupies residues Met-1–Tyr-165. Residues Arg-5, Gly-46, Lys-49, Thr-50, Ser-51, Glu-112–Phe-114, Arg-155, Tyr-165, and Arg-202 contribute to the ATP site. Mg(2+) is bound at residue Thr-50. A small ATPAse domain (RuvB-S) region spans residues Asn-166–Asp-236. Residues Glu-239–Trp-316 form a head domain (RuvB-H) region. DNA is bound by residues Lys-294 and Arg-299.

The protein belongs to the RuvB family. In terms of assembly, homohexamer. Forms an RuvA(8)-RuvB(12)-Holliday junction (HJ) complex. HJ DNA is sandwiched between 2 RuvA tetramers; dsDNA enters through RuvA and exits via RuvB. An RuvB hexamer assembles on each DNA strand where it exits the tetramer. Each RuvB hexamer is contacted by two RuvA subunits (via domain III) on 2 adjacent RuvB subunits; this complex drives branch migration. In the full resolvosome a probable DNA-RuvA(4)-RuvB(12)-RuvC(2) complex forms which resolves the HJ.

The protein resides in the cytoplasm. It catalyses the reaction ATP + H2O = ADP + phosphate + H(+). In terms of biological role, the RuvA-RuvB-RuvC complex processes Holliday junction (HJ) DNA during genetic recombination and DNA repair, while the RuvA-RuvB complex plays an important role in the rescue of blocked DNA replication forks via replication fork reversal (RFR). RuvA specifically binds to HJ cruciform DNA, conferring on it an open structure. The RuvB hexamer acts as an ATP-dependent pump, pulling dsDNA into and through the RuvAB complex. RuvB forms 2 homohexamers on either side of HJ DNA bound by 1 or 2 RuvA tetramers; 4 subunits per hexamer contact DNA at a time. Coordinated motions by a converter formed by DNA-disengaged RuvB subunits stimulates ATP hydrolysis and nucleotide exchange. Immobilization of the converter enables RuvB to convert the ATP-contained energy into a lever motion, pulling 2 nucleotides of DNA out of the RuvA tetramer per ATP hydrolyzed, thus driving DNA branch migration. The RuvB motors rotate together with the DNA substrate, which together with the progressing nucleotide cycle form the mechanistic basis for DNA recombination by continuous HJ branch migration. Branch migration allows RuvC to scan DNA until it finds its consensus sequence, where it cleaves and resolves cruciform DNA. The chain is Holliday junction branch migration complex subunit RuvB from Mycoplasmopsis synoviae (strain 53) (Mycoplasma synoviae).